The following is a 250-amino-acid chain: Ribosomal RNA small subunit methyltransferase J (250 aa).

S-adenosyl-L-methionine contacts are provided by residues 101 to 102 (RD), 117 to 118 (ER), 153 to 154 (SS), and Asp171.

Belongs to the methyltransferase superfamily. RsmJ family.

Its subcellular location is the cytoplasm. The enzyme catalyses guanosine(1516) in 16S rRNA + S-adenosyl-L-methionine = N(2)-methylguanosine(1516) in 16S rRNA + S-adenosyl-L-homocysteine + H(+). Specifically methylates the guanosine in position 1516 of 16S rRNA. In Klebsiella pneumoniae (strain 342), this protein is Ribosomal RNA small subunit methyltransferase J.